A 116-amino-acid polypeptide reads, in one-letter code: Spexin (116 aa).

The first 26 residues, 1–26 (MKGLRSLAATTLALFLVFVFLGNSSC), serve as a signal peptide directing secretion. Positions 27 to 35 (APQRLLERR) are excised as a propeptide. Q49 carries the post-translational modification Glutamine amide. 2 consecutive propeptides follow at residues 50–116 (GRRF…LLNW) and 74–116 (PNPQ…LLNW). Residues 55-73 (SDQSRRKDLSDRPLPERRS) are compositionally biased toward basic and acidic residues. The tract at residues 55–77 (SDQSRRKDLSDRPLPERRSPNPQ) is disordered.

It belongs to the spexin family. In terms of tissue distribution, expressed in the type I glomic cells within the carotid body (at protein level). Expressed predominantly in pancreas, testis, kidney, brain and placenta. Expressed in submucosal layer of esophagus and stomach fundus.

The protein localises to the secreted. Its subcellular location is the extracellular space. The protein resides in the cytoplasmic vesicle. It is found in the secretory vesicle. Functionally, plays a role as a central modulator of cardiovascular and renal function and nociception. Also plays a role in energy metabolism and storage. Inhibits adrenocortical cell proliferation with minor stimulation on corticosteroid release. Acts as a ligand for galanin receptors GALR2 and GALR3. Intracerebroventricular administration of the peptide induces an increase in arterial blood pressure, a decrease in both heart rate and renal excretion and delayed natriuresis. Intraventricular administration of the peptide induces antinociceptive activity. Also induces contraction of muscarinic-like stomach smooth muscles. Intraperitoneal administration of the peptide induces a reduction in food consumption and body weight. Inhibits long chain fatty acid uptake into adipocytes. In terms of biological role, intracerebroventricular administration of the peptide induces a decrease in heart rate, but no change in arterial pressure, and an increase in urine flow rate. Intraventricular administration of the peptide induces antinociceptive activity. In Homo sapiens (Human), this protein is Spexin (SPX).